Here is a 196-residue protein sequence, read N- to C-terminus: UPF0314 protein Oant_0840 (196 aa).

A run of 4 helical transmembrane segments spans residues 15-35 (WGLG…WLYF), 65-85 (WYTL…TVIA), 127-147 (FGDS…GFLI), and 151-171 (LPTK…LIVI).

The protein belongs to the UPF0314 family.

The protein resides in the cell membrane. This is UPF0314 protein Oant_0840 from Brucella anthropi (strain ATCC 49188 / DSM 6882 / CCUG 24695 / JCM 21032 / LMG 3331 / NBRC 15819 / NCTC 12168 / Alc 37) (Ochrobactrum anthropi).